Reading from the N-terminus, the 178-residue chain is Signal peptidase complex subunit 2 (178 aa).

Residues 1 to 37 (MSSAKPINVYSIPELNQALDEALPSVFARLNYERSYA) lie on the Cytoplasmic side of the membrane. Residues 38-58 (LLDAKLYIGYSIAVVAGLSFF) form a helical membrane-spanning segment. At 59-67 (LDKKFERDQ) the chain is on the lumenal side. Residues 68–88 (IVTYQKLLVGAYFVLSLLFWY) traverse the membrane as a helical segment. At 89–178 (FSRFIEKGTV…HNVLDTKKNE (90 aa)) the chain is on the cytoplasmic side.

It belongs to the SPCS2 family. In terms of assembly, component of the signal peptidase complex (SPC) composed of a catalytic subunit SEC11 and three accessory subunits SPC1, SPC2 and SPC3. The complex induces a local thinning of the ER membrane which is used to measure the length of the signal peptide (SP) h-region of protein substrates. This ensures the selectivity of the complex towards h-regions shorter than 18-20 amino acids. SPC associates with the translocon complex. Interacts with SBH1 and SEB2/SBH2.

The protein resides in the endoplasmic reticulum membrane. Component of the signal peptidase complex (SPC) which catalyzes the cleavage of N-terminal signal sequences from nascent proteins as they are translocated into the lumen of the endoplasmic reticulum. Enhances the enzymatic activity of SPC and facilitates the interactions between different components of the translocation site. In Saccharomyces cerevisiae (strain ATCC 204508 / S288c) (Baker's yeast), this protein is Signal peptidase complex subunit 2 (SPC2).